Consider the following 1417-residue polypeptide: DNA-directed RNA polymerase subunit beta' (1417 aa).

Residues Cys71, Cys73, Cys86, and Cys89 each coordinate Zn(2+). Mg(2+)-binding residues include Asp461, Asp463, and Asp465. Positions 815, 889, 896, and 899 each coordinate Zn(2+).

The protein belongs to the RNA polymerase beta' chain family. The RNAP catalytic core consists of 2 alpha, 1 beta, 1 beta' and 1 omega subunit. When a sigma factor is associated with the core the holoenzyme is formed, which can initiate transcription. The cofactor is Mg(2+). Zn(2+) is required as a cofactor.

The enzyme catalyses RNA(n) + a ribonucleoside 5'-triphosphate = RNA(n+1) + diphosphate. Functionally, DNA-dependent RNA polymerase catalyzes the transcription of DNA into RNA using the four ribonucleoside triphosphates as substrates. This chain is DNA-directed RNA polymerase subunit beta', found in Pasteurella multocida (strain Pm70).